A 567-amino-acid chain; its full sequence is Asparagine--tRNA ligase, chloroplastic/mitochondrial (567 aa).

A DNA-binding region (OB) is located at residues 113–191; it reads NIMGWVRTLR…VELKVEKIIV (79 aa).

This sequence belongs to the class-II aminoacyl-tRNA synthetase family.

It localises to the plastid. The protein resides in the chloroplast. The protein localises to the mitochondrion. The catalysed reaction is tRNA(Asn) + L-asparagine + ATP = L-asparaginyl-tRNA(Asn) + AMP + diphosphate + H(+). This chain is Asparagine--tRNA ligase, chloroplastic/mitochondrial, found in Arabidopsis thaliana (Mouse-ear cress).